The primary structure comprises 138 residues: Flagellar basal body rod protein FlgB (138 aa).

The protein belongs to the flagella basal body rod proteins family. As to quaternary structure, the basal body constitutes a major portion of the flagellar organelle and consists of a number of rings mounted on a central rod. In Gram-negative bacteria, at least four rings, L, P, S and M are present, whereas Gram-positive bacteria lack the L and P rings. The rod consists of about 26 subunits of FlgG in the distal portion, and FlgB, FlgC and FlgF build up the proximal portion of the rod with about 6 subunits each. Rod assembly occurs by export via the flagellum-specific pathway of its constituent proteins and by their incorporation into the rod structure in the probable order of FlgB, FlgC, FlgF and FlgG. Another protein, FliE, also assembles onto the stable rod structure. Interacts with FliE and peptidoglycan hydrolase FlgJ (via N-terminus), which seems to function as a scaffold or cap for rod assembly.

The protein resides in the bacterial flagellum basal body. Its function is as follows. Structural component of flagellum, the bacterial motility apparatus. Part of the rod structure of flagellar basal body. This is Flagellar basal body rod protein FlgB (flgB) from Salmonella typhimurium (strain LT2 / SGSC1412 / ATCC 700720).